A 145-amino-acid chain; its full sequence is D-aminoacyl-tRNA deacylase (145 aa).

The Gly-cisPro motif, important for rejection of L-amino acids signature appears at 137–138 (GP).

It belongs to the DTD family. Homodimer.

The protein resides in the cytoplasm. It carries out the reaction glycyl-tRNA(Ala) + H2O = tRNA(Ala) + glycine + H(+). The enzyme catalyses a D-aminoacyl-tRNA + H2O = a tRNA + a D-alpha-amino acid + H(+). In terms of biological role, an aminoacyl-tRNA editing enzyme that deacylates mischarged D-aminoacyl-tRNAs. Also deacylates mischarged glycyl-tRNA(Ala), protecting cells against glycine mischarging by AlaRS. Acts via tRNA-based rather than protein-based catalysis; rejects L-amino acids rather than detecting D-amino acids in the active site. By recycling D-aminoacyl-tRNA to D-amino acids and free tRNA molecules, this enzyme counteracts the toxicity associated with the formation of D-aminoacyl-tRNA entities in vivo and helps enforce protein L-homochirality. This Alteromonas mediterranea (strain DSM 17117 / CIP 110805 / LMG 28347 / Deep ecotype) protein is D-aminoacyl-tRNA deacylase.